Consider the following 232-residue polypeptide: Small ribosomal subunit protein uS3 (232 aa).

The KH type-2 domain maps to 39–107 (IRKFLKKELF…DVAINIKEEK (69 aa)). A disordered region spans residues 213-232 (QPEPAEEKKGGRRPSRKRGE). The span at 222-232 (GGRRPSRKRGE) shows a compositional bias: basic residues.

It belongs to the universal ribosomal protein uS3 family. In terms of assembly, part of the 30S ribosomal subunit. Forms a tight complex with proteins S10 and S14.

In terms of biological role, binds the lower part of the 30S subunit head. Binds mRNA in the 70S ribosome, positioning it for translation. This chain is Small ribosomal subunit protein uS3, found in Sulfurovum sp. (strain NBC37-1).